Here is a 603-residue protein sequence, read N- to C-terminus: Serine/threonine-protein kinase PLK1 (603 aa).

The interval 1–35 (MSAAVTAGKLARAPADPGKAGVPGVAAPGAPAAAP) is disordered. Ser2 is modified (N-acetylserine). Thr6 bears the Phosphothreonine mark. Over residues 13–35 (APADPGKAGVPGVAAPGAPAAAP) the composition is skewed to low complexity. Lys19 is covalently cross-linked (Glycyl lysine isopeptide (Lys-Gly) (interchain with G-Cter in ubiquitin)). The 253-residue stretch at 53 to 305 (YVRGRFLGKG…INELLNDEFF (253 aa)) folds into the Protein kinase domain. ATP is bound by residues 59–67 (LGKGGFAKC) and Lys82. A Phosphoserine modification is found at Ser103. Glu131 lines the ATP pocket. Ser137 is subject to Phosphoserine. The Proton acceptor role is filled by Asp176. ATP-binding positions include 178–181 (KLGN) and Asp194. The tract at residues 194 to 221 (DFGLATKVEYDGERKKTLCGTPNYIAPE) is activation loop. Phosphothreonine; by AURKA is present on Thr210. Position 214 is a phosphothreonine (Thr214). Phosphoserine; by autocatalysis is present on Ser269. Position 335 is a phosphoserine (Ser335). Positions 337-340 (RKPL) match the D-box that targets the protein for proteasomal degradation in anaphase motif. A Glycyl lysine isopeptide (Lys-Gly) (interchain with G-Cter in SUMO2) cross-link involves residue Lys338. Residues 338–364 (KPLTVLNKGLENPLPERPREKEEPVVR) form a disordered region. Residues 351–364 (LPERPREKEEPVVR) are compositionally biased toward basic and acidic residues. Phosphoserine occurs at positions 375 and 450. The POLO box 1 domain maps to 410–488 (WVSKWVDYSD…LKYFRNYMSE (79 aa)). Residue Lys492 forms a Glycyl lysine isopeptide (Lys-Gly) (interchain with G-Cter in ubiquitin) linkage. Residues 493-507 (AGANITPREGDELAR) are linker. Thr498 is subject to Phosphothreonine. The region spanning 510–592 (YLRTWFRTRS…ARTMVDKLLS (83 aa)) is the POLO box 2 domain. The segment at 538–540 (HTK) is important for interaction with phosphorylated proteins.

This sequence belongs to the protein kinase superfamily. Ser/Thr protein kinase family. CDC5/Polo subfamily. Interacts with CEP170. Interacts with EVI5. Interacts with FAM29A. Interacts with SLX4/BTBD12. Interacts with TTDN1. Interacts (via POLO-box domain) with the phosphorylated form of BUB1, CDC25C and CENPU. Interacts with KIF2A. Interacts with CYLD. Part of an astrin (SPAG5)-kinastrin (SKAP) complex containing KNSTRN, SPAG5, PLK1, DYNLL1 and SGO2. Interacts with BIRC6/bruce. Interacts with CDK1-phosphorylated FRY; this interaction occurs in mitotic cells, but not in interphase cells. FRY interaction facilitates AURKA-mediated PLK1 phosphorylation. Interacts with CDK1-phosphorylated DCTN6 during mitotic prometaphase; the interaction facilitates recruitment to kinetochores. Interacts with CEP68; the interaction phosphorylates CEP68. Interacts (via POLO-box domain) with DCTN1. Interacts with CEP20 in later G1, S, G2 and M phases of the cell cycle; this interaction recruits PLK1 to centrosomes, a step required for S phase progression. Interacts with KLHL22. Interacts (via POLO box domains) with NEDD9/HEF1 (via C-terminus). Interacts with FIRRM (via N-terminus region); required for maintaining, but not activating, PLK1 kinase activity. Interacts with FZR1. Interacts with SKA3; the interaction promotes the stability of PLK1; the interaction promotes the stability of PLK1. Interacts with the MTMR3:MTMR4 heterooligomer; brings CEP55 and PLK1 together during early mitosis, regulating the phosphorylation of CEP55 by PLK1 and its recruitment to the midbody where it can mediate cell abscission. Catalytic activity is enhanced by phosphorylation of Thr-210. Phosphorylation at Thr-210 is first detected on centrosomes in the G2 phase of the cell cycle, peaks in prometaphase and gradually disappears from centrosomes during anaphase. Dephosphorylation at Thr-210 at centrosomes is probably mediated by protein phosphatase 1C (PP1C), via interaction with PPP1R12A/MYPT1. Autophosphorylation and phosphorylation of Ser-137 may not be significant for the activation of PLK1 during mitosis, but may enhance catalytic activity during recovery after DNA damage checkpoint. Phosphorylated in vitro by STK10. Post-translationally, ubiquitinated by the anaphase promoting complex/cyclosome (APC/C) in anaphase and following DNA damage, leading to its degradation by the proteasome. Ubiquitination is mediated via its interaction with FZR1/CDH1. Ubiquitination and subsequent degradation prevents entry into mitosis and is essential to maintain an efficient G2 DNA damage checkpoint. Monoubiquitination at Lys-492 by the BCR(KLHL22) ubiquitin ligase complex does not lead to degradation: it promotes PLK1 dissociation from phosphoreceptor proteins and subsequent removal from kinetochores, allowing silencing of the spindle assembly checkpoint (SAC) and chromosome segregation. As to expression, placenta and colon.

Its subcellular location is the nucleus. The protein localises to the chromosome. It localises to the centromere. The protein resides in the kinetochore. It is found in the cytoplasm. Its subcellular location is the cytoskeleton. The protein localises to the microtubule organizing center. It localises to the centrosome. The protein resides in the spindle. It is found in the midbody. The catalysed reaction is L-seryl-[protein] + ATP = O-phospho-L-seryl-[protein] + ADP + H(+). The enzyme catalyses L-threonyl-[protein] + ATP = O-phospho-L-threonyl-[protein] + ADP + H(+). Its activity is regulated as follows. Activated by phosphorylation of Thr-210 by AURKA; phosphorylation by AURKA is enhanced by BORA. Once activated, activity is stimulated by binding target proteins. Binding of target proteins has no effect on the non-activated kinase. Several inhibitors targeting PLKs are currently in development and are under investigation in a growing number of clinical trials, such as BI 2536, an ATP-competitive PLK1 inhibitor or BI 6727, a dihydropteridinone that specifically inhibits the catalytic activity of PLK1. Its function is as follows. Serine/threonine-protein kinase that performs several important functions throughout M phase of the cell cycle, including the regulation of centrosome maturation and spindle assembly, the removal of cohesins from chromosome arms, the inactivation of anaphase-promoting complex/cyclosome (APC/C) inhibitors, and the regulation of mitotic exit and cytokinesis. Polo-like kinase proteins act by binding and phosphorylating proteins that are already phosphorylated on a specific motif recognized by the POLO box domains. Phosphorylates BORA, BUB1B/BUBR1, CCNB1, CDC25C, CEP55, ECT2, ERCC6L, FBXO5/EMI1, FOXM1, KIF20A/MKLP2, CENPU, NEDD1, NINL, NPM1, NUDC, PKMYT1/MYT1, KIZ, MRE11, PPP1R12A/MYPT1, POLQ, PRC1, RACGAP1/CYK4, RAD51, RHNO1, SGO1, STAG2/SA2, TEX14, TOPORS, p73/TP73, TPT1, WEE1 and HNRNPU. Plays a key role in centrosome functions and the assembly of bipolar spindles by phosphorylating KIZ, NEDD1 and NINL. NEDD1 phosphorylation promotes subsequent targeting of the gamma-tubulin ring complex (gTuRC) to the centrosome, an important step for spindle formation. Phosphorylation of NINL component of the centrosome leads to NINL dissociation from other centrosomal proteins. Involved in mitosis exit and cytokinesis by phosphorylating CEP55, ECT2, KIF20A/MKLP2, CENPU, PRC1 and RACGAP1. Recruited at the central spindle by phosphorylating and docking PRC1 and KIF20A/MKLP2; creates its own docking sites on PRC1 and KIF20A/MKLP2 by mediating phosphorylation of sites subsequently recognized by the POLO box domains. Phosphorylates RACGAP1, thereby creating a docking site for the Rho GTP exchange factor ECT2 that is essential for the cleavage furrow formation. Promotes the central spindle recruitment of ECT2. Plays a central role in G2/M transition of mitotic cell cycle by phosphorylating CCNB1, CDC25C, FOXM1, CENPU, PKMYT1/MYT1, PPP1R12A/MYPT1 and WEE1. Part of a regulatory circuit that promotes the activation of CDK1 by phosphorylating the positive regulator CDC25C and inhibiting the negative regulators WEE1 and PKMYT1/MYT1. Also acts by mediating phosphorylation of cyclin-B1 (CCNB1) on centrosomes in prophase. Phosphorylates FOXM1, a key mitotic transcription regulator, leading to enhance FOXM1 transcriptional activity. Involved in kinetochore functions and sister chromatid cohesion by phosphorylating BUB1B/BUBR1, FBXO5/EMI1 and STAG2/SA2. PLK1 is high on non-attached kinetochores suggesting a role of PLK1 in kinetochore attachment or in spindle assembly checkpoint (SAC) regulation. Required for kinetochore localization of BUB1B. Regulates the dissociation of cohesin from chromosomes by phosphorylating cohesin subunits such as STAG2/SA2. Phosphorylates SGO1: required for spindle pole localization of isoform 3 of SGO1 and plays a role in regulating its centriole cohesion function. Mediates phosphorylation of FBXO5/EMI1, a negative regulator of the APC/C complex during prophase, leading to FBXO5/EMI1 ubiquitination and degradation by the proteasome. Acts as a negative regulator of p53 family members: phosphorylates TOPORS, leading to inhibit the sumoylation of p53/TP53 and simultaneously enhance the ubiquitination and subsequent degradation of p53/TP53. Phosphorylates the transactivation domain of the transcription factor p73/TP73, leading to inhibit p73/TP73-mediated transcriptional activation and pro-apoptotic functions. Phosphorylates BORA, and thereby promotes the degradation of BORA. Contributes to the regulation of AURKA function. Also required for recovery after DNA damage checkpoint and entry into mitosis. Phosphorylates MISP, leading to stabilization of cortical and astral microtubule attachments required for proper spindle positioning. Together with MEIKIN, acts as a regulator of kinetochore function during meiosis I: required both for mono-orientation of kinetochores on sister chromosomes and protection of centromeric cohesin from separase-mediated cleavage. Phosphorylates CEP68 and is required for its degradation. Regulates nuclear envelope breakdown during prophase by phosphorylating DCTN1 resulting in its localization in the nuclear envelope. Phosphorylates the heat shock transcription factor HSF1, promoting HSF1 nuclear translocation upon heat shock. Phosphorylates HSF1 also in the early mitotic period; this phosphorylation regulates HSF1 localization to the spindle pole, the recruitment of the SCF(BTRC) ubiquitin ligase complex induicing HSF1 degradation, and hence mitotic progression. Regulates mitotic progression by phosphorylating RIOK2. Through the phosphorylation of DZIP1 regulates the localization during mitosis of the BBSome, a ciliary protein complex involved in cilium biogenesis. Regulates DNA repair during mitosis by mediating phosphorylation of POLQ and RHNO1, thereby promoting POLQ recruitment to DNA damage sites. Phosphorylates ATXN10 which may play a role in the regulation of cytokinesis and may stimulate the proteasome-mediated degradation of ATXN10. This is Serine/threonine-protein kinase PLK1 (PLK1) from Homo sapiens (Human).